Consider the following 257-residue polypeptide: MLILLSCAKTMSDVSKTKTPLTTFPGFRKEAAEVALQMSQFSVEELERLLKVNPKIAVENYRRYQAFHSEGTRELPALLAYTGIVFKRVHPQDFSEEDFCYAQDHLRLTSFCYGVLRPLDMIRPYRLEGDVRLPEPGNRTMFDYWKPILTDRFIADIKKVGGVLCNLASDEMRGLFDWKRVEKEVRVITPEFHVWKNGKLATVVVYTKMSRGEMTRYILKNRIESVEQLKTFAWEGFEFNEQLSDETKYVFTNGKTE.

It belongs to the UPF0246 family.

This is UPF0246 protein BF4021 from Bacteroides fragilis (strain YCH46).